The sequence spans 515 residues: Bifunctional purine biosynthesis protein PurH (515 aa).

Residues 1-145 (MTKRVLISVS…KNHASVTVVV (145 aa)) form the MGS-like domain.

This sequence belongs to the PurH family.

The catalysed reaction is (6R)-10-formyltetrahydrofolate + 5-amino-1-(5-phospho-beta-D-ribosyl)imidazole-4-carboxamide = 5-formamido-1-(5-phospho-D-ribosyl)imidazole-4-carboxamide + (6S)-5,6,7,8-tetrahydrofolate. The enzyme catalyses IMP + H2O = 5-formamido-1-(5-phospho-D-ribosyl)imidazole-4-carboxamide. It functions in the pathway purine metabolism; IMP biosynthesis via de novo pathway; 5-formamido-1-(5-phospho-D-ribosyl)imidazole-4-carboxamide from 5-amino-1-(5-phospho-D-ribosyl)imidazole-4-carboxamide (10-formyl THF route): step 1/1. The protein operates within purine metabolism; IMP biosynthesis via de novo pathway; IMP from 5-formamido-1-(5-phospho-D-ribosyl)imidazole-4-carboxamide: step 1/1. This is Bifunctional purine biosynthesis protein PurH from Streptococcus pneumoniae serotype 19F (strain G54).